A 215-amino-acid polypeptide reads, in one-letter code: Wtf element wtf7 (215 aa).

The segment at 1–21 (MSGSYAPIEDSADELSVHSGN) is disordered. 3 helical membrane-spanning segments follow: residues 119–139 (LAQSLFLLLPFNFIFFACLFF), 149–169 (LMGWILFGIWCLTCFLSSFIL), and 189–209 (LILFGLLFPGIVTMVVFYALY).

The protein belongs to the WTF family.

The protein resides in the spore membrane. In terms of biological role, may act in meiotic drive. In Schizosaccharomyces pombe (strain 972 / ATCC 24843) (Fission yeast), this protein is Wtf element wtf7.